The chain runs to 136 residues: Large ribosomal subunit protein uL16 (136 aa).

This sequence belongs to the universal ribosomal protein uL16 family. As to quaternary structure, part of the 50S ribosomal subunit.

Its function is as follows. Binds 23S rRNA and is also seen to make contacts with the A and possibly P site tRNAs. In Bradyrhizobium diazoefficiens (strain JCM 10833 / BCRC 13528 / IAM 13628 / NBRC 14792 / USDA 110), this protein is Large ribosomal subunit protein uL16.